The primary structure comprises 109 residues: Large ribosomal subunit protein uL24 (109 aa).

The protein belongs to the universal ribosomal protein uL24 family. In terms of assembly, part of the 50S ribosomal subunit.

One of two assembly initiator proteins, it binds directly to the 5'-end of the 23S rRNA, where it nucleates assembly of the 50S subunit. Its function is as follows. One of the proteins that surrounds the polypeptide exit tunnel on the outside of the subunit. The sequence is that of Large ribosomal subunit protein uL24 from Desulforapulum autotrophicum (strain ATCC 43914 / DSM 3382 / VKM B-1955 / HRM2) (Desulfobacterium autotrophicum).